We begin with the raw amino-acid sequence, 67 residues long: Stomoxyn (67 aa).

An N-terminal signal peptide occupies residues Met-1–Ala-24. Threonine amide is present on Thr-66.

In terms of tissue distribution, constitutively expressed in the adult anterior midgut; proventriculus, thoracic and reservoir regions.

It is found in the secreted. Its function is as follows. Has antimicrobial activity against most Gram-positive and Gram-negative bacteria, filamentous fungi and yeasts tested. Has trypanolytic effect on T.b.rhodesiense and limited hemolytic activity against bovine red blood cells. May play an important role in protecting the stored blood in the anterior midgut from microorganisms prior to digestion. Adopts an amphipathic alpha-helical structure only in the presence of an organic solvent that mimics a phospholipid membrane. In Stomoxys calcitrans (Stable fly), this protein is Stomoxyn.